A 510-amino-acid polypeptide reads, in one-letter code: Serine/threonine protein phosphatase 2A 57 kDa regulatory subunit B' kappa isoform (510 aa).

The tract at residues 1-51 (MWKGFLSKLPRKTSASGRGADLDSGQCSNGAGNGNPIQRTSSCGSIPSGRS) is disordered. The segment covering 25 to 51 (GQCSNGAGNGNPIQRTSSCGSIPSGRS) has biased composition (polar residues). Thr-476 and Thr-493 each carry phosphothreonine. Ser-502 is subject to Phosphoserine. The residue at position 508 (Thr-508) is a Phosphothreonine.

It belongs to the phosphatase 2A regulatory subunit B56 family. PP2A consists of a common heteromeric enzyme, composed of a catalytic subunit (subunits C), a constant regulatory subunit (subunit A), and a variety of regulatory subunits such as subunits B (the R2/B/PR55/B55, R3/B''/PR72/PR130/PR59 and R5/B'/B56 families). Interacts with SIT1. In terms of processing, phosphorylated at Thr-476, Thr-493, Ser-502 and Thr-508 by SIT1. As to expression, expressed in root stele and epidermal cells.

Its subcellular location is the cytoplasm. It is found in the cytosol. The protein resides in the cell membrane. Its function is as follows. B regulatory subunit of phosphatase 2A (PP2A) involved in salt stress response. Under salt stress conditions, required for the catalytic activity of PP2A and the dephosphorylation of SIT1, a negative regulator of salt tolerance. Dephosphorylation of SIT1 turns off salt-induced SIT1 activity directly, which has a positive effect on salt tolerance. The polypeptide is Serine/threonine protein phosphatase 2A 57 kDa regulatory subunit B' kappa isoform (Oryza sativa subsp. japonica (Rice)).